We begin with the raw amino-acid sequence, 753 residues long: Glycerophosphodiester phosphodiesterase GDPDL6 (753 aa).

The signal sequence occupies residues 1 to 17 (MLRFFILFSLFLHSSVA). GP-PDE domains follow at residues 41–339 (PAVV…SQSI) and 355–654 (ALVI…TRYL). Residues Asn304, Asn516, Asn603, and Asn715 are each glycosylated (N-linked (GlcNAc...) asparagine). Residues 707–729 (PPVAKLASNGTEGGPPQTPPRSG) form a disordered region. The helical transmembrane segment at 731–751 (VAIAANLSLSLLAMMALGLLY) threads the bilayer.

This sequence belongs to the glycerophosphoryl diester phosphodiesterase family. As to expression, expressed in flowers and siliques.

It localises to the membrane. The enzyme catalyses a sn-glycero-3-phosphodiester + H2O = an alcohol + sn-glycerol 3-phosphate + H(+). This is Glycerophosphodiester phosphodiesterase GDPDL6 from Arabidopsis thaliana (Mouse-ear cress).